A 142-amino-acid polypeptide reads, in one-letter code: 3-hydroxyacyl-[acyl-carrier-protein] dehydratase FabZ (142 aa).

His-47 is an active-site residue.

The protein belongs to the thioester dehydratase family. FabZ subfamily.

The protein resides in the cytoplasm. The catalysed reaction is a (3R)-hydroxyacyl-[ACP] = a (2E)-enoyl-[ACP] + H2O. Involved in unsaturated fatty acids biosynthesis. Catalyzes the dehydration of short chain beta-hydroxyacyl-ACPs and long chain saturated and unsaturated beta-hydroxyacyl-ACPs. The protein is 3-hydroxyacyl-[acyl-carrier-protein] dehydratase FabZ of Thermoanaerobacter sp. (strain X514).